The primary structure comprises 412 residues: MPVNLIAVQPSDLLPVPGVRVGVAEAGIRKANRRDLTLIELAAGSRVAGVFTLNRFCAAPVQLCKQHIAGGDVRALVINTGVANAGTGEQGLADAHATCVAVGRTLGVAPEQVLPFSTGVILEALPVDRLIAGLPAAHADLREDGWFDAAHAIMTTDTLAKAVSRQVEIGGRTVTLTGISKGAGMIKPNMATMLGFLACDAAVSQALLDALTKEAADLSFNSITVDGDTSTNDSFIVVATGQAGNAEIADPLGSDFHALRDAVIDVSIRLAQAIVRDGEGATKFMTIAVEGGLDVVECRKVAYAIGQSPLVKTAFFASDPNLGRILAAIGYAGIQDLDVGGLRVWLGTAAEEVLVAELGGRAPTYREEDGVRVMKEAEITVRVDLGRGRARATVWTCDFSYDYVKINADYRS.

The substrate site is built by threonine 155, lysine 181, threonine 192, glutamate 279, asparagine 407, and serine 412. Threonine 192 (nucleophile) is an active-site residue.

The protein belongs to the ArgJ family. As to quaternary structure, heterotetramer of two alpha and two beta chains.

The protein resides in the cytoplasm. The enzyme catalyses N(2)-acetyl-L-ornithine + L-glutamate = N-acetyl-L-glutamate + L-ornithine. The catalysed reaction is L-glutamate + acetyl-CoA = N-acetyl-L-glutamate + CoA + H(+). Its pathway is amino-acid biosynthesis; L-arginine biosynthesis; L-ornithine and N-acetyl-L-glutamate from L-glutamate and N(2)-acetyl-L-ornithine (cyclic): step 1/1. The protein operates within amino-acid biosynthesis; L-arginine biosynthesis; N(2)-acetyl-L-ornithine from L-glutamate: step 1/4. Its function is as follows. Catalyzes two activities which are involved in the cyclic version of arginine biosynthesis: the synthesis of N-acetylglutamate from glutamate and acetyl-CoA as the acetyl donor, and of ornithine by transacetylation between N(2)-acetylornithine and glutamate. This Aromatoleum aromaticum (strain DSM 19018 / LMG 30748 / EbN1) (Azoarcus sp. (strain EbN1)) protein is Arginine biosynthesis bifunctional protein ArgJ.